The chain runs to 502 residues: Maturase K (502 aa).

This sequence belongs to the intron maturase 2 family. MatK subfamily.

The protein localises to the plastid. It is found in the chloroplast. In terms of biological role, usually encoded in the trnK tRNA gene intron. Probably assists in splicing its own and other chloroplast group II introns. This chain is Maturase K, found in Sisymbrium irio (London rocket).